The following is a 100-amino-acid chain: Large ribosomal subunit protein uL23 (100 aa).

This sequence belongs to the universal ribosomal protein uL23 family. In terms of assembly, part of the 50S ribosomal subunit. Contacts protein L29, and trigger factor when it is bound to the ribosome.

One of the early assembly proteins it binds 23S rRNA. One of the proteins that surrounds the polypeptide exit tunnel on the outside of the ribosome. Forms the main docking site for trigger factor binding to the ribosome. The polypeptide is Large ribosomal subunit protein uL23 (Vibrio vulnificus (strain CMCP6)).